We begin with the raw amino-acid sequence, 443 residues long: GTPase Der (443 aa).

EngA-type G domains lie at 3 to 168 (PLLA…PEAP) and 178 to 353 (VHLA…RNRS). Residues 9–16 (GRPNVGKS), 56–60 (DTGGY), 120–123 (NKVE), 184–191 (GRPNVGKS), 231–235 (DTAGL), and 296–299 (NKWD) contribute to the GTP site. Residues 354–438 (QNVSTSQLNK…PISLRFLHKN (85 aa)) form the KH-like domain.

This sequence belongs to the TRAFAC class TrmE-Era-EngA-EngB-Septin-like GTPase superfamily. EngA (Der) GTPase family. Associates with the 50S ribosomal subunit.

Its function is as follows. GTPase that plays an essential role in the late steps of ribosome biogenesis. This is GTPase Der from Chlorobium chlorochromatii (strain CaD3).